A 570-amino-acid polypeptide reads, in one-letter code: NADPH oxidase 2 (570 aa).

Topologically, residues 2 to 9 (GNWAVNEG) are cytoplasmic. Residues 10-36 (LSIFVILVWLGLNVFLFVWYYRVYDIP) traverse the membrane as a helical segment. Residues 37-46 (PKFFYTRKLL) lie on the Extracellular side of the membrane. Residues 47-72 (GSALALARAPAACLNFNCMLILLPVC) form a helical membrane-spanning segment. Residues 54–286 (RAPAACLNFN…MFLYLCERLV (233 aa)) enclose the Ferric oxidoreductase domain. At 73–95 (RNLLSFLRGSSACCSTRVRRQLD) the chain is on the cytoplasmic side. Residues 96-130 (RNLTFHKMVAWMIALHSAIHTIAHLFNVEWCVNAR) traverse the membrane as a helical segment. Residues H101 and H115 each contribute to the heme b site. The Extracellular segment spans residues 131–163 (VNNSDPYSVALSELGDRQNESYLNFARKRIKNP). N-linked (GlcNAc...) asparagine glycans are attached at residues N132 and N149. K161 participates in a covalent cross-link: Glycyl lysine isopeptide (Lys-Gly) (interchain with G-Cter in ubiquitin). A helical membrane pass occupies residues 164–194 (EGGLYLAVTLLAGITGVVITLCLILIITSST). At 195–203 (KTIRRSYFE) the chain is on the cytoplasmic side. FAD contacts are provided by R199 and S200. The chain crosses the membrane as a helical span at residues 204–222 (VFWYTHHLFVIFFIGLAIH). Positions 206, 209, 222, 226, and 227 each coordinate heme b. Residues 223 to 267 (GAERIVRGQTAESLAVHNITVCEQKISEWGKIKECPIPQFAGNPP) are Extracellular-facing. A glycan (N-linked (GlcNAc...) asparagine) is linked at N240. A Glycyl lysine isopeptide (Lys-Gly) (interchain with G-Cter in ubiquitin) cross-link involves residue K255. Residues M268, Y280, and R287 each contribute to the heme b site. The helical transmembrane segment at 268 to 285 (MTWKWIVGPMFLYLCERL) threads the bilayer. Residues 286–570 (VRFWRSQQKV…VHFIFNKENF (285 aa)) are Cytoplasmic-facing. One can recognise an FAD-binding FR-type domain in the interval 287–397 (RFWRSQQKVV…DGPFGTASED (111 aa)). Glycyl lysine isopeptide (Lys-Gly) (interchain with G-Cter in ubiquitin) cross-links involve residues K294, K299, K306, K328, and K334. Residues W337, H338, P339, T341, H354, R356, W361, and T362 each coordinate FAD. Residue K381 forms a Glycyl lysine isopeptide (Lys-Gly) (interchain with G-Cter in ubiquitin) linkage. Positions 411, 446, and 481 each coordinate NADPH. Residue K506 forms a Glycyl lysine isopeptide (Lys-Gly) (interchain with G-Cter in ubiquitin) linkage. R513 is a binding site for NADPH. K567 participates in a covalent cross-link: Glycyl lysine isopeptide (Lys-Gly) (interchain with G-Cter in ubiquitin).

As to quaternary structure, component of the phagocyte NADPH oxidase core complex/cytochrome b558 complex, composed of CYBB (heavy chain (beta)) and CYBA (light chain (alpha)). Component of the phagocyte NADPH oxidase complex composed of an obligatory core heterodimer formed by the membrane proteins CYBA and CYBB and the cytosolic regulatory subunits NCF1/p47-phox, NCF2/p67-phox, NCF4/p40-phox and the small GTPase RAC1 or RAC2. Interacts with NCF1 (phosphorylated form). Interacts with NCF2; the interaction is enhanced in the presence of GBP7. Interacts with RAC2. Interacts with RAC1. Interacts with calprotectin (S100A8/9). Interacts with NRROS; the interaction is direct and impairs formation of a stable NADPH oxidase complex. Interacts with CYBC1; CYBC1 may act as a chaperone stabilizing Cytochrome b-245 heterodimer. The CYBA-CYBB complex interacts with GBP7. The cofactor is FAD. In terms of processing, glycosylated. Phosphorylated on Ser and Thr residues by PKC during neutrophils activation. Phosphorylation enhances the NADPH oxidase activity and stimulates its interaction with RAC2, NCF2/p67-phox, and NCF1/p47-phox. Post-translationally, undergoes 'Lys-48'-linked polyubiquitination, likely by RNF145, triggering endoplasmic reticulum-associated degradation. Detected in neutrophils (at protein level).

It is found in the cell membrane. The enzyme catalyses NADPH + 2 O2 = 2 superoxide + NADP(+) + H(+). Catalytic subunit of the phagocyte NADPH oxidase complex that mediates the transfer of electrons from cytosolic NADPH to O2 to produce the superoxide anion (O2(-)). In the activated complex, electrons are first transferred from NADPH to flavin adenine dinucleotide (FAD) and subsequently transferred via two heme molecules to molecular oxygen, producing superoxide through an outer-sphere reaction. Activation of the NADPH oxidase complex is initiated by the assembly of cytosolic subunits of the NADPH oxidase complex with the core NADPH oxidase complex to form a complex at the plasma membrane or phagosomal membrane. This activation process is initiated by phosphorylation dependent binding of the cytosolic NCF1/p47-phox subunit to the C-terminus of CYBA/p22-phox. NADPH oxidase complex assembly is impaired through interaction with NRROS. This is NADPH oxidase 2 from Homo sapiens (Human).